The following is a 404-amino-acid chain: 4-hydroxy-3-methylbut-2-en-1-yl diphosphate synthase (flavodoxin) (404 aa).

Positions 310, 313, 345, and 352 each coordinate [4Fe-4S] cluster.

It belongs to the IspG family. It depends on [4Fe-4S] cluster as a cofactor.

The enzyme catalyses (2E)-4-hydroxy-3-methylbut-2-enyl diphosphate + oxidized [flavodoxin] + H2O + 2 H(+) = 2-C-methyl-D-erythritol 2,4-cyclic diphosphate + reduced [flavodoxin]. Its pathway is isoprenoid biosynthesis; isopentenyl diphosphate biosynthesis via DXP pathway; isopentenyl diphosphate from 1-deoxy-D-xylulose 5-phosphate: step 5/6. Converts 2C-methyl-D-erythritol 2,4-cyclodiphosphate (ME-2,4cPP) into 1-hydroxy-2-methyl-2-(E)-butenyl 4-diphosphate. The polypeptide is 4-hydroxy-3-methylbut-2-en-1-yl diphosphate synthase (flavodoxin) (Treponema pallidum (strain Nichols)).